A 113-amino-acid chain; its full sequence is Heavy metal-associated isoprenylated plant protein 15 (113 aa).

The region spanning 1–65 (MIVWMGVYDQ…KWGKAKLTLY (65 aa)) is the HMA domain. Residues 69–89 (DALKEAKIAEAKQKREEIERE) are a coiled coil. Position 110 is a cysteine methyl ester (Cys110). Cys110 carries the S-farnesyl cysteine lipid modification. Positions 111–113 (VIC) are cleaved as a propeptide — removed in mature form.

The protein belongs to the HIPP family. Expressed in embryo sacs.

Functionally, probable heavy-metal-binding protein. The sequence is that of Heavy metal-associated isoprenylated plant protein 15 from Arabidopsis thaliana (Mouse-ear cress).